The primary structure comprises 342 residues: Eukaryotic translation initiation factor 3 subunit F (342 aa).

The MPN domain maps to V30–G166. The interval T310–A342 is disordered. Over residues G317–R331 the composition is skewed to basic and acidic residues.

Belongs to the eIF-3 subunit F family. In terms of assembly, component of the eukaryotic translation initiation factor 3 (eIF-3) complex.

It is found in the cytoplasm. Its function is as follows. Component of the eukaryotic translation initiation factor 3 (eIF-3) complex, which is involved in protein synthesis of a specialized repertoire of mRNAs and, together with other initiation factors, stimulates binding of mRNA and methionyl-tRNAi to the 40S ribosome. The eIF-3 complex specifically targets and initiates translation of a subset of mRNAs involved in cell proliferation. The sequence is that of Eukaryotic translation initiation factor 3 subunit F from Phaeosphaeria nodorum (strain SN15 / ATCC MYA-4574 / FGSC 10173) (Glume blotch fungus).